A 558-amino-acid chain; its full sequence is MKLRSSAITQGVQRSPNRAMLRAVGFEDDDFNKPIIGIANGYSTITPCNIGLNDLAKQAEKAIKDWDGMPQMFGTITVSDGISMGTEGMKYSLVSREVIADSIETACNAQSMDGVLAIGGCDKNMPGAMLAMARMNIPGIFVYGGTIKPGKLNGEDLTVVSAFEAVGQLTSGKITKEKLIEVEKHCIPGAGSCGGMFTANTMSAAIEAMGLSLPHSSTMAAEDQEKIKSTQKSAEVLIKAIKENIRPLDLLTKQAFENAISVVMAVGGSTNAVLHLLAIAHSSGVELSLDEFEKIRQRVPVLCDLKPSGKYVTVDLHKAGGIPQVMKILLEAGLINENCRTIENKTIKEMLLDVPAEPPSDQDVIRPFDSPVYKKGHLAILKGNLATEGSVAKISGIKEPILTGPAKVFESEEDCLKAILTEQIHSGDVVVIRNEGPVGGPGMREMLAPTSAIVGQGLGEKVALITDGRFSGGTYGLVVGHVAPEAAVGGNIALIQDGDSITVDAIQKLIQVNIEEAELKRRRSLWVKPKPKYNSGVLGKYATLVSSSSKGAVTDQNC.

Residue Cys48 coordinates [2Fe-2S] cluster. Asp80 is a binding site for Mg(2+). Cys121 contacts [2Fe-2S] cluster. The Mg(2+) site is built by Asp122 and Lys123. Lys123 is modified (N6-carboxylysine). [2Fe-2S] cluster is bound at residue Cys193. Glu445 contributes to the Mg(2+) binding site. Ser471 (proton acceptor) is an active-site residue.

This sequence belongs to the IlvD/Edd family. In terms of assembly, homodimer. [2Fe-2S] cluster is required as a cofactor. Requires Mg(2+) as cofactor.

The enzyme catalyses (2R)-2,3-dihydroxy-3-methylbutanoate = 3-methyl-2-oxobutanoate + H2O. The catalysed reaction is (2R,3R)-2,3-dihydroxy-3-methylpentanoate = (S)-3-methyl-2-oxopentanoate + H2O. It functions in the pathway amino-acid biosynthesis; L-isoleucine biosynthesis; L-isoleucine from 2-oxobutanoate: step 3/4. It participates in amino-acid biosynthesis; L-valine biosynthesis; L-valine from pyruvate: step 3/4. In terms of biological role, functions in the biosynthesis of branched-chain amino acids. Catalyzes the dehydration of (2R,3R)-2,3-dihydroxy-3-methylpentanoate (2,3-dihydroxy-3-methylvalerate) into 2-oxo-3-methylpentanoate (2-oxo-3-methylvalerate) and of (2R)-2,3-dihydroxy-3-methylbutanoate (2,3-dihydroxyisovalerate) into 2-oxo-3-methylbutanoate (2-oxoisovalerate), the penultimate precursor to L-isoleucine and L-valine, respectively. This chain is Dihydroxy-acid dehydratase, found in Prochlorococcus marinus (strain SARG / CCMP1375 / SS120).